Reading from the N-terminus, the 878-residue chain is Phosphoenolpyruvate carboxylase (878 aa).

Residues H140 and K545 contribute to the active site.

Belongs to the PEPCase type 1 family. The cofactor is Mg(2+).

The catalysed reaction is oxaloacetate + phosphate = phosphoenolpyruvate + hydrogencarbonate. Functionally, forms oxaloacetate, a four-carbon dicarboxylic acid source for the tricarboxylic acid cycle. In Pseudomonas syringae pv. syringae (strain B728a), this protein is Phosphoenolpyruvate carboxylase.